The primary structure comprises 892 residues: Ataxin-7 (892 aa).

A compositionally biased stretch (basic and acidic residues) spans 1-15; sequence MSERAADDVRGEPRR. Disordered stretches follow at residues 1–74 and 195–247; these read MSER…SAAA and SKGG…SRVP. The segment covering 16–38 has biased composition (low complexity); that stretch reads AAAAAGGAAAAAARQQQQQQQQQ. The span at 39-55 shows a compositional bias: pro residues; sequence QPPPPQPQRQQHPPPPP. The segment covering 195–222 has biased composition (low complexity); it reads SKGGSASGSNRSSSGGVLSASSSSSKLL. A Glycyl lysine isopeptide (Lys-Gly) (interchain with G-Cter in SUMO); alternate cross-link involves residue lysine 257. Lysine 257 is covalently cross-linked (Glycyl lysine isopeptide (Lys-Gly) (interchain with G-Cter in SUMO2); alternate). Disordered stretches follow at residues 298-328, 389-505, 616-730, and 818-892; these read PTLP…NSNN, HKNK…ESVE, KSVP…SSHS, and SHGS…KARP. Composition is skewed to basic and acidic residues over residues 318-327 and 389-403; these read LEKKPEDNSN and HKNK…RHPD. Residues 334 to 401 enclose the SCA7 domain; it reads KRLSEREFDP…KTREKELIRH (68 aa). 3 stretches are compositionally biased toward pro residues: residues 405-419, 448-458, and 468-483; these read QQPP…PAPP, HTPSLPRPPGC, and IDPP…PLPA. Acidic residues predominate over residues 493 to 502; that stretch reads EEGEGDDKEE. Residues 616–629 are compositionally biased toward polar residues; the sequence is KSVPAHGTTLNAQP. Over residues 640 to 669 the composition is skewed to low complexity; the sequence is SMQSRQVSSSSSSPSTPSGLSSVPSSPMSR. The span at 670 to 680 shows a compositional bias: basic residues; sequence KPQKLKSSKSL. Positions 685-695 are enriched in polar residues; that stretch reads SSGNSTNCQNA. Composition is skewed to low complexity over residues 716 to 730 and 840 to 851; these read HSSS…SSHS and SPSSSSINNSSS.

This sequence belongs to the ataxin-7 family. Component of the SAGA transcription coactivator-HAT complex, at least composed of SUPT3H, GCN5L2, TAF5L, TAF6L, SUPT7L, TADA3L, TAD1L, TAF10, TAF12, TRRAP, TAF9 and ATXN7. The STAGA core complex is associated with a subcomplex required for histone deubiquitination composed of ATXN7L3, ENY2 and USP22. Interacts with SORBS1, PSMC1 and CRX. Interacts with TRRAP, GCN5L2 and TAF10. Interacts with alpha tubulin. Post-translationally, proteolytically cleaved by caspase-7 (CASP7). The cleavage may be involved in SCA7 degeneration: the isoform fragments may exert distinct toxic influences that could contribute to selective neurodegeneration. In terms of processing, sumoylation decreases the aggregation propensity and cellular toxicity of forms with an expanded poly-Gln region but has no effect on subcellular location or interaction with components of the STAGA complex. As to expression, isoform a is expressed in CNS, but is expressed predominantly in the peripherical tissues. In terms of tissue distribution, isoform b is expressed in CNS. Also highly expressed in the frontal lobe, skeletal muscle and spinal cord and is expressed at a lower level in the lung, lymphoblast and intestine.

It is found in the nucleus. Its subcellular location is the nucleolus. The protein resides in the nucleus matrix. It localises to the cytoplasm. The protein localises to the cytoskeleton. Acts as a component of the SAGA (aka STAGA) transcription coactivator-HAT complex. Mediates the interaction of SAGA complex with the CRX and is involved in CRX-dependent gene activation. Probably involved in tethering the deubiquitination module within the SAGA complex. Necessary for microtubule cytoskeleton stabilization. Involved in neurodegeneration. The chain is Ataxin-7 (ATXN7) from Homo sapiens (Human).